Consider the following 259-residue polypeptide: Phosphatidylserine decarboxylase proenzyme (259 aa).

Catalysis depends on charge relay system; for autoendoproteolytic cleavage activity residues D86, H142, and S226. The Schiff-base intermediate with substrate; via pyruvic acid; for decarboxylase activity role is filled by S226. S226 carries the post-translational modification Pyruvic acid (Ser); by autocatalysis.

It belongs to the phosphatidylserine decarboxylase family. PSD-B subfamily. Prokaryotic type I sub-subfamily. As to quaternary structure, heterodimer of a large membrane-associated beta subunit and a small pyruvoyl-containing alpha subunit. Requires pyruvate as cofactor. Is synthesized initially as an inactive proenzyme. Formation of the active enzyme involves a self-maturation process in which the active site pyruvoyl group is generated from an internal serine residue via an autocatalytic post-translational modification. Two non-identical subunits are generated from the proenzyme in this reaction, and the pyruvate is formed at the N-terminus of the alpha chain, which is derived from the carboxyl end of the proenzyme. The autoendoproteolytic cleavage occurs by a canonical serine protease mechanism, in which the side chain hydroxyl group of the serine supplies its oxygen atom to form the C-terminus of the beta chain, while the remainder of the serine residue undergoes an oxidative deamination to produce ammonia and the pyruvoyl prosthetic group on the alpha chain. During this reaction, the Ser that is part of the protease active site of the proenzyme becomes the pyruvoyl prosthetic group, which constitutes an essential element of the active site of the mature decarboxylase.

The protein localises to the cell membrane. It carries out the reaction a 1,2-diacyl-sn-glycero-3-phospho-L-serine + H(+) = a 1,2-diacyl-sn-glycero-3-phosphoethanolamine + CO2. Its pathway is phospholipid metabolism; phosphatidylethanolamine biosynthesis; phosphatidylethanolamine from CDP-diacylglycerol: step 2/2. Functionally, catalyzes the formation of phosphatidylethanolamine (PtdEtn) from phosphatidylserine (PtdSer). The chain is Phosphatidylserine decarboxylase proenzyme from Halalkalibacterium halodurans (strain ATCC BAA-125 / DSM 18197 / FERM 7344 / JCM 9153 / C-125) (Bacillus halodurans).